A 91-amino-acid polypeptide reads, in one-letter code: MSRSLKKGPFVDHHLLAKVEKAVAIKDKKPVKTWSRRSTILPEFIGVTIAVHNGKQHVPVYVTDQMVGHKLGEFALTRTFKGHPADKKAKR.

This sequence belongs to the universal ribosomal protein uS19 family.

In terms of biological role, protein S19 forms a complex with S13 that binds strongly to the 16S ribosomal RNA. The polypeptide is Small ribosomal subunit protein uS19 (Leptothrix cholodnii (strain ATCC 51168 / LMG 8142 / SP-6) (Leptothrix discophora (strain SP-6))).